Reading from the N-terminus, the 88-residue chain is Apolipoprotein C-I (88 aa).

An N-terminal signal peptide occupies residues 1 to 26; the sequence is MRLFIALPVLIVVVAMALEGPAPAQA.

It belongs to the apolipoprotein C1 family.

The protein resides in the secreted. Inhibitor of lipoprotein binding to the low density lipoprotein (LDL) receptor, LDL receptor-related protein, and very low density lipoprotein (VLDL) receptor. Associates with high density lipoproteins (HDL) and the triacylglycerol-rich lipoproteins in the plasma and makes up about 10% of the protein of the VLDL and 2% of that of HDL. Appears to interfere directly with fatty acid uptake and is also the major plasma inhibitor of cholesteryl ester transfer protein (CETP). Binds free fatty acids and reduces their intracellular esterification. Modulates the interaction of APOE with beta-migrating VLDL and inhibits binding of beta-VLDL to the LDL receptor-related protein. The polypeptide is Apolipoprotein C-I (Apoc1) (Rattus norvegicus (Rat)).